Reading from the N-terminus, the 266-residue chain is Putative carbamate hydrolase RutD (266 aa).

An AB hydrolase-1 domain is found at 14-115; that stretch reads PVVVLISGLG…TVLISVNGWL (102 aa).

It belongs to the AB hydrolase superfamily. Hydrolase RutD family.

The catalysed reaction is carbamate + 2 H(+) = NH4(+) + CO2. Involved in pyrimidine catabolism. May facilitate the hydrolysis of carbamate, a reaction that can also occur spontaneously. The chain is Putative carbamate hydrolase RutD from Shigella sonnei (strain Ss046).